A 428-amino-acid chain; its full sequence is Enolase (428 aa).

Position 173 (glutamine 173) interacts with (2R)-2-phosphoglycerate. The active-site Proton donor is glutamate 217. Mg(2+) is bound by residues aspartate 253, glutamate 294, and aspartate 320. (2R)-2-phosphoglycerate-binding residues include lysine 345, arginine 374, serine 375, and lysine 396. Residue lysine 345 is the Proton acceptor of the active site.

Belongs to the enolase family. Mg(2+) is required as a cofactor.

The protein localises to the cytoplasm. It is found in the secreted. The protein resides in the cell surface. The catalysed reaction is (2R)-2-phosphoglycerate = phosphoenolpyruvate + H2O. It functions in the pathway carbohydrate degradation; glycolysis; pyruvate from D-glyceraldehyde 3-phosphate: step 4/5. Its function is as follows. Catalyzes the reversible conversion of 2-phosphoglycerate (2-PG) into phosphoenolpyruvate (PEP). It is essential for the degradation of carbohydrates via glycolysis. This Methanosarcina mazei (strain ATCC BAA-159 / DSM 3647 / Goe1 / Go1 / JCM 11833 / OCM 88) (Methanosarcina frisia) protein is Enolase.